Consider the following 362-residue polypeptide: tRNA/tmRNA (uracil-C(5))-methyltransferase (362 aa).

Residues glutamine 186, tyrosine 214, asparagine 219, glutamate 235, and aspartate 295 each contribute to the S-adenosyl-L-methionine site. Cysteine 320 (nucleophile) is an active-site residue. The active-site Proton acceptor is the glutamate 354.

It belongs to the class I-like SAM-binding methyltransferase superfamily. RNA M5U methyltransferase family. TrmA subfamily.

It catalyses the reaction uridine(54) in tRNA + S-adenosyl-L-methionine = 5-methyluridine(54) in tRNA + S-adenosyl-L-homocysteine + H(+). The enzyme catalyses uridine(341) in tmRNA + S-adenosyl-L-methionine = 5-methyluridine(341) in tmRNA + S-adenosyl-L-homocysteine + H(+). Functionally, dual-specificity methyltransferase that catalyzes the formation of 5-methyluridine at position 54 (m5U54) in all tRNAs, and that of position 341 (m5U341) in tmRNA (transfer-mRNA). The polypeptide is tRNA/tmRNA (uracil-C(5))-methyltransferase (Ectopseudomonas mendocina (strain ymp) (Pseudomonas mendocina)).